The sequence spans 572 residues: Urease subunit alpha (572 aa).

The Urease domain maps to 134–572; sequence AGIDTHIHLI…AAMNQLYFFG (439 aa). Ni(2+) contacts are provided by His139, His141, and Lys222. Lys222 carries the post-translational modification N6-carboxylysine. His224 provides a ligand contact to substrate. Ni(2+)-binding residues include His251 and His277. Catalysis depends on His325, which acts as the Proton donor. Asp365 provides a ligand contact to Ni(2+).

This sequence belongs to the metallo-dependent hydrolases superfamily. Urease alpha subunit family. As to quaternary structure, heterotrimer of UreA (gamma), UreB (beta) and UreC (alpha) subunits. Three heterotrimers associate to form the active enzyme. Ni cation serves as cofactor. In terms of processing, carboxylation allows a single lysine to coordinate two nickel ions.

The protein localises to the cytoplasm. The catalysed reaction is urea + 2 H2O + H(+) = hydrogencarbonate + 2 NH4(+). It functions in the pathway nitrogen metabolism; urea degradation; CO(2) and NH(3) from urea (urease route): step 1/1. The chain is Urease subunit alpha from Edwardsiella ictaluri (strain 93-146).